The chain runs to 150 residues: MLQNVIKELYDKGVLIFLDPNNYVTNNVAENPEIFANRDKFLEMYQDPIKIGWIFCYTPSLEEVLSTIKEDTCCLIEFGFNSDTEKKACETGRLLINHLVRHKFMAHWDENAIKNHKISTVITAKDLPESIQDLIVDYAPTTSTNPEQRE.

Belongs to the IIV-6 391R family.

This is an uncharacterized protein from Invertebrate iridescent virus 3 (IIV-3).